The chain runs to 504 residues: Signal transduction histidine-protein kinase/phosphatase MprB (504 aa).

At 1 to 26 (MWWFRRRDRAPLRATSSLSLRWRVML) the chain is on the cytoplasmic side. A helical transmembrane segment spans residues 27-47 (LAMSMVAMVVVLMSFAVYAVI). At 48–163 (SAALYSDIDN…PTEAVMNKLR (116 aa)) the chain is on the extracellular side. A helical transmembrane segment spans residues 164–184 (WVLLIVGGIGVAVAAVAGGMV). Residues 185–504 (TRAGLRPVGR…SVESQSTRAT (320 aa)) lie on the Cytoplasmic side of the membrane. The HAMP domain maps to 186 to 238 (RAGLRPVGRLTEAAERVARTDDLRPIPVFGSDELARLTEAFNLMLRALAESRE). The Histidine kinase domain occupies 246-466 (DAGHELRTPL…SIYVLLPGRR (221 aa)). His-249 is subject to Phosphohistidine; by autocatalysis. Residues 471–504 (QLPGATAGARSTDIENSRGSANVISVESQSTRAT) form a disordered region. Polar residues predominate over residues 487 to 504 (SRGSANVISVESQSTRAT).

The cofactor is Mg(2+). Requires Mn(2+) as cofactor. In terms of processing, autophosphorylated.

Its subcellular location is the cell membrane. It catalyses the reaction ATP + protein L-histidine = ADP + protein N-phospho-L-histidine.. Member of the two-component regulatory system MprB/MprA which contributes to maintaining a balance among several systems involved in stress resistance and is required for establishment and maintenance of persistent infection in the host. In response to environmental signals MprB acts both as a membrane-associated protein kinase that undergoes autophosphorylation and subsequently transfers the phosphate to MprA, and a protein phosphatase that dephosphorylates phospho-MprA. MprB/MprA up-regulates expression of mprA and pepD. The sequence is that of Signal transduction histidine-protein kinase/phosphatase MprB (mprB) from Mycobacterium bovis (strain ATCC BAA-935 / AF2122/97).